Here is a 355-residue protein sequence, read N- to C-terminus: N6-Methyl-AMP deaminase (355 aa).

The Zn(2+) site is built by histidine 24 and histidine 26. N(6)-methyl-AMP is bound by residues histidine 26, asparagine 28, histidine 74, 106–109 (STPR), aspartate 148, and glycine 181. Histidine 208 is a binding site for Zn(2+). Residues glutamate 211, aspartate 293, and aspartate 294 each contribute to the N(6)-methyl-AMP site. The active-site Proton donor is glutamate 211. Residue aspartate 293 participates in Zn(2+) binding.

It belongs to the metallo-dependent hydrolases superfamily. Adenosine and AMP deaminases family. Monomer. It depends on Zn(2+) as a cofactor.

The enzyme catalyses N(6)-methyl-AMP + H2O + H(+) = IMP + methylamine. Functionally, catalyzes the hydrolysis of the free cytosolic methylated adenosine nucleotide N(6)-methyl-AMP (N6-mAMP) to produce inositol monophosphate (IMP) and methylamine. Is required for the catabolism of cytosolic N6-mAMP, which is derived from the degradation of mRNA containing N6-methylated adenine (m6A). Catalyzes the removal of different alkyl groups not only from N6-substituted purine or 2-aminopurine nucleoside monophosphates but also from O6-substituted compounds in vitro. The polypeptide is N6-Methyl-AMP deaminase (Homo sapiens (Human)).